Consider the following 85-residue polypeptide: Sec-independent protein translocase protein TatA (85 aa).

Residues 7–27 (VFGSLGWTEILLILFIALLLF) form a helical membrane-spanning segment. The tract at residues 50–85 (LTGESDDSSQQISQEQERSVPKEETKTSKSKKSKSA) is disordered. The segment covering 64–76 (EQERSVPKEETKT) has biased composition (basic and acidic residues).

It belongs to the TatA/E family. As to quaternary structure, forms a complex with TatC.

The protein resides in the cell inner membrane. Part of the twin-arginine translocation (Tat) system that transports large folded proteins containing a characteristic twin-arginine motif in their signal peptide across membranes. TatA could form the protein-conducting channel of the Tat system. The chain is Sec-independent protein translocase protein TatA from Leptospira interrogans serogroup Icterohaemorrhagiae serovar Lai (strain 56601).